We begin with the raw amino-acid sequence, 428 residues long: Enolase (428 aa).

Gln-163 contributes to the (2R)-2-phosphoglycerate binding site. Catalysis depends on Glu-205, which acts as the Proton donor. Positions 242, 283, and 310 each coordinate Mg(2+). Residues Lys-335, Arg-364, Ser-365, and Lys-386 each coordinate (2R)-2-phosphoglycerate. The active-site Proton acceptor is Lys-335.

This sequence belongs to the enolase family. The cofactor is Mg(2+).

The protein localises to the cytoplasm. The protein resides in the secreted. Its subcellular location is the cell surface. The enzyme catalyses (2R)-2-phosphoglycerate = phosphoenolpyruvate + H2O. The protein operates within carbohydrate degradation; glycolysis; pyruvate from D-glyceraldehyde 3-phosphate: step 4/5. Catalyzes the reversible conversion of 2-phosphoglycerate (2-PG) into phosphoenolpyruvate (PEP). It is essential for the degradation of carbohydrates via glycolysis. The sequence is that of Enolase from Saccharopolyspora erythraea (strain ATCC 11635 / DSM 40517 / JCM 4748 / NBRC 13426 / NCIMB 8594 / NRRL 2338).